Here is a 594-residue protein sequence, read N- to C-terminus: DNA ligase (594 aa).

NAD(+)-binding positions include 32-36 (DEEYD), 81-82 (SL), and E118. The N6-AMP-lysine intermediate role is filled by K120. NAD(+)-binding residues include R141, E181, K299, and K323. The Zn(2+) site is built by C417, C420, C436, and C442.

Belongs to the NAD-dependent DNA ligase family. LigA subfamily. It depends on Mg(2+) as a cofactor. Requires Mn(2+) as cofactor.

It carries out the reaction NAD(+) + (deoxyribonucleotide)n-3'-hydroxyl + 5'-phospho-(deoxyribonucleotide)m = (deoxyribonucleotide)n+m + AMP + beta-nicotinamide D-nucleotide.. In terms of biological role, DNA ligase that catalyzes the formation of phosphodiester linkages between 5'-phosphoryl and 3'-hydroxyl groups in double-stranded DNA using NAD as a coenzyme and as the energy source for the reaction. It is essential for DNA replication and repair of damaged DNA. This chain is DNA ligase, found in Blochmanniella floridana.